A 167-amino-acid chain; its full sequence is NAD(P)H-quinone oxidoreductase subunit I, chloroplastic (167 aa).

4Fe-4S ferredoxin-type domains follow at residues 55-84 (GRIHFEFDKCIACEVCVRVCPIDLPVVDWK) and 95-124 (LNYSIDFGICIFCGNCVEYCPTNCLSMTEE). [4Fe-4S] cluster contacts are provided by Cys64, Cys67, Cys70, Cys74, Cys104, Cys107, Cys110, and Cys114.

This sequence belongs to the complex I 23 kDa subunit family. As to quaternary structure, NDH is composed of at least 16 different subunits, 5 of which are encoded in the nucleus. [4Fe-4S] cluster is required as a cofactor.

The protein localises to the plastid. It is found in the chloroplast thylakoid membrane. The catalysed reaction is a plastoquinone + NADH + (n+1) H(+)(in) = a plastoquinol + NAD(+) + n H(+)(out). It carries out the reaction a plastoquinone + NADPH + (n+1) H(+)(in) = a plastoquinol + NADP(+) + n H(+)(out). In terms of biological role, NDH shuttles electrons from NAD(P)H:plastoquinone, via FMN and iron-sulfur (Fe-S) centers, to quinones in the photosynthetic chain and possibly in a chloroplast respiratory chain. The immediate electron acceptor for the enzyme in this species is believed to be plastoquinone. Couples the redox reaction to proton translocation, and thus conserves the redox energy in a proton gradient. The chain is NAD(P)H-quinone oxidoreductase subunit I, chloroplastic from Pelargonium hortorum (Common geranium).